Here is a 341-residue protein sequence, read N- to C-terminus: Uroporphyrinogen decarboxylase (341 aa).

Substrate is bound by residues 26–30, aspartate 75, tyrosine 150, serine 205, and histidine 318; that span reads RQAGR.

The protein belongs to the uroporphyrinogen decarboxylase family. As to quaternary structure, homodimer.

The protein localises to the cytoplasm. The catalysed reaction is uroporphyrinogen III + 4 H(+) = coproporphyrinogen III + 4 CO2. Its pathway is porphyrin-containing compound metabolism; protoporphyrin-IX biosynthesis; coproporphyrinogen-III from 5-aminolevulinate: step 4/4. Functionally, catalyzes the decarboxylation of four acetate groups of uroporphyrinogen-III to yield coproporphyrinogen-III. This chain is Uroporphyrinogen decarboxylase, found in Thermus thermophilus (strain ATCC BAA-163 / DSM 7039 / HB27).